We begin with the raw amino-acid sequence, 487 residues long: Cyclic AMP-dependent transcription factor ATF-2 (487 aa).

The segment at 7–31 (FLCTAPGCGQRFTNEDHLAVHKHKH) adopts a C2H2-type zinc-finger fold. Residue Thr34 is modified to Phosphothreonine; by PKC/PRKCH. Ser44 carries the phosphoserine; by VRK1 modification. 2 positions are modified to phosphothreonine: Thr51 and Thr53. A Phosphothreonine; by VRK1 modification is found at Thr55. Phosphoserine is present on residues Ser72 and Ser94. Thr98 carries the post-translational modification Phosphothreonine. Position 103 is a phosphoserine; by PKC/PRKCA and PKC/PRKCB (Ser103). Disordered stretches follow at residues 107 to 130 (EPSV…TNDE) and 241 to 355 (PGIP…RQKR). Phosphoserine is present on Ser118. A compositionally biased stretch (polar residues) spans 264–275 (LTQQHPPVTNGD). An essential for its histone acetyltransferase activity region spans residues 278–281 (KGHG). Low complexity predominate over residues 300 to 316 (PATSTTETPASPAHTTP). A Phosphoserine modification is found at Ser310. Ser322 is subject to Phosphoserine; by PKC/PRKCA and PKC/PRKCB. The span at 328–345 (AANEDPDEKRRKFLERNR) shows a compositional bias: basic and acidic residues. A bZIP domain is found at 334 to 397 (DEKRRKFLER…AQLKQLLLAH (64 aa)). A basic motif region spans residues 336–356 (KRRKFLERNRAAASRCRQKRK). Lys339 carries the post-translational modification N6-acetyllysine. Residue Ser349 is modified to Phosphoserine; by PKC/PRKCA and PKC/PRKCB. An N6-acetyllysine modification is found at Lys356. The leucine-zipper stretch occupies residues 362-390 (LEKKAEDLSSLNGQLQSEVTLLRNEVAQL). The Nuclear export signal signature appears at 387 to 396 (VAQLKQLLLA). The disordered stretch occupies residues 407–487 (KKSGYHTADK…PSSQAQPSGS (81 aa)). 2 positions are modified to phosphoserine: Ser424 and Ser428. Positions 425 to 436 (VPSSPHTEAIQH) are enriched in polar residues. Residues 437 to 449 (SSVSTSNGVSSTS) are compositionally biased toward low complexity. A compositionally biased stretch (polar residues) spans 457–470 (SVLTQMADQSTEPA). Phosphoserine; by ATM is present on residues Ser472 and Ser480. The span at 478-487 (PSSQAQPSGS) shows a compositional bias: polar residues.

It belongs to the bZIP family. ATF subfamily. Binds DNA as a dimer and can form a homodimer in the absence of DNA. Can form a heterodimer with JUN. Heterodimerization is essential for its transcriptional activity. Interacts with SMAD3 and SMAD4. Binds through its N-terminal region to UTF1 which acts as a coactivator of ATF2 transcriptional activity. Interacts with the HK1/VDAC1 complex. Interacts with NBN, MRE11, XPO1, KAT5 and CUL3. Phosphorylation of Thr-51 by MAPK14 and MAPK11, and at Thr-53 by MAPK1/ERK2, MAPK3/ERK1, MAPK11, MAPK12 and MAPK14 in response to external stimulus like insulin causes increased transcriptional activity. Phosphorylated by PLK3 following hyperosmotic stress. Also phosphorylated and activated by JNK and CaMK4. ATM-mediated phosphorylation at Ser-472 and Ser-480 stimulates its function in DNA damage response. Phosphorylation at Ser-44, Thr-55 and Ser-103 activates its transcriptional activity. Phosphorylation at Thr-51 or Thr-53 enhances acetylation of histones H2B and H4.

It localises to the nucleus. The protein resides in the cytoplasm. It is found in the mitochondrion outer membrane. Transcriptional activator which regulates the transcription of various genes, including those involved in anti-apoptosis, cell growth, and DNA damage response. Dependent on its binding partner, binds to CRE (cAMP response element) consensus sequences (5'-TGACGTCA-3') or to AP-1 (activator protein 1) consensus sequences (5'-TGACTCA-3'). In the nucleus, contributes to global transcription and the DNA damage response, in addition to specific transcriptional activities that are related to cell development, proliferation and death. In the cytoplasm, interacts with and perturbs HK1- and VDAC1-containing complexes at the mitochondrial outer membrane, thereby impairing mitochondrial membrane potential, inducing mitochondrial leakage and promoting cell death. The phosphorylated form (mediated by ATM) plays a role in the DNA damage response and is involved in the ionizing radiation (IR)-induced S phase checkpoint control and in the recruitment of the MRN complex into the IR-induced foci (IRIF). Exhibits histone acetyltransferase (HAT) activity which specifically acetylates histones H2B and H4 in vitro. In concert with CUL3 and RBX1, promotes the degradation of KAT5 thereby attenuating its ability to acetylate and activate ATM. Can elicit oncogenic or tumor suppressor activities depending on the tissue or cell type. This is Cyclic AMP-dependent transcription factor ATF-2 (Atf2) from Rattus norvegicus (Rat).